A 369-amino-acid chain; its full sequence is tRNA pseudouridine synthase D (369 aa).

Asp-80 acts as the Nucleophile in catalysis. Residues 156 to 318 enclose the TRUD domain; the sequence is GIPNWFGEQR…LKQERRALRL (163 aa).

Belongs to the pseudouridine synthase TruD family.

It carries out the reaction uridine(13) in tRNA = pseudouridine(13) in tRNA. Its function is as follows. Responsible for synthesis of pseudouridine from uracil-13 in transfer RNAs. The chain is tRNA pseudouridine synthase D from Xanthomonas oryzae pv. oryzae (strain KACC10331 / KXO85).